The following is a 128-amino-acid chain: uncharacterized protein (128 aa).

3 helical membrane-spanning segments follow: residues isoleucine 30–serine 50, valine 65–glutamine 85, and tryptophan 93–valine 113.

It localises to the cell membrane. This is an uncharacterized protein from Rickettsia prowazekii (strain Madrid E).